A 230-amino-acid polypeptide reads, in one-letter code: Uracil-DNA glycosylase (230 aa).

The active-site Proton acceptor is the Asp-70.

Belongs to the uracil-DNA glycosylase (UDG) superfamily. UNG family.

The protein resides in the cytoplasm. The enzyme catalyses Hydrolyzes single-stranded DNA or mismatched double-stranded DNA and polynucleotides, releasing free uracil.. Its function is as follows. Excises uracil residues from the DNA which can arise as a result of misincorporation of dUMP residues by DNA polymerase or due to deamination of cytosine. In Pseudomonas fluorescens (strain SBW25), this protein is Uracil-DNA glycosylase.